A 331-amino-acid chain; its full sequence is Biotin synthase (331 aa).

The region spanning 52–277 (PDVEVEGIIS…RTMLRFAGGR (226 aa)) is the Radical SAM core domain. 3 residues coordinate [4Fe-4S] cluster: C67, C71, and C74. [2Fe-2S] cluster contacts are provided by C110, C143, C202, and R272.

It belongs to the radical SAM superfamily. Biotin synthase family. Homodimer. It depends on [4Fe-4S] cluster as a cofactor. [2Fe-2S] cluster is required as a cofactor.

The enzyme catalyses (4R,5S)-dethiobiotin + (sulfur carrier)-SH + 2 reduced [2Fe-2S]-[ferredoxin] + 2 S-adenosyl-L-methionine = (sulfur carrier)-H + biotin + 2 5'-deoxyadenosine + 2 L-methionine + 2 oxidized [2Fe-2S]-[ferredoxin]. The protein operates within cofactor biosynthesis; biotin biosynthesis; biotin from 7,8-diaminononanoate: step 2/2. Functionally, catalyzes the conversion of dethiobiotin (DTB) to biotin by the insertion of a sulfur atom into dethiobiotin via a radical-based mechanism. This is Biotin synthase from Mycobacterium sp. (strain JLS).